A 201-amino-acid polypeptide reads, in one-letter code: Histidinol dehydrogenase (201 aa).

It belongs to the histidinol dehydrogenase family. In terms of assembly, homodimer. It depends on Zn(2+) as a cofactor.

The enzyme catalyses L-histidinol + 2 NAD(+) + H2O = L-histidine + 2 NADH + 3 H(+). Its pathway is amino-acid biosynthesis; L-histidine biosynthesis; L-histidine from 5-phospho-alpha-D-ribose 1-diphosphate: step 9/9. Functionally, catalyzes the sequential NAD-dependent oxidations of L-histidinol to L-histidinaldehyde and then to L-histidine. In Buchnera aphidicola subsp. Melaphis rhois, this protein is Histidinol dehydrogenase (hisD).